The primary structure comprises 298 residues: ATP synthase gamma chain (298 aa).

It belongs to the ATPase gamma chain family. In terms of assembly, F-type ATPases have 2 components, CF(1) - the catalytic core - and CF(0) - the membrane proton channel. CF(1) has five subunits: alpha(3), beta(3), gamma(1), delta(1), epsilon(1). CF(0) has three main subunits: a, b and c.

Its subcellular location is the cell inner membrane. Its function is as follows. Produces ATP from ADP in the presence of a proton gradient across the membrane. The gamma chain is believed to be important in regulating ATPase activity and the flow of protons through the CF(0) complex. This chain is ATP synthase gamma chain, found in Acidithiobacillus ferridurans.